A 447-amino-acid chain; its full sequence is Tubulin beta-1 chain (447 aa).

GTP is bound by residues glutamine 11, glutamate 69, serine 138, glycine 142, threonine 143, glycine 144, asparagine 204, and asparagine 226. Glutamate 69 contributes to the Mg(2+) binding site. A disordered region spans residues 424–447; sequence QYQDATAEEEGEGDEEEAEGEAAA. The segment covering 429–447 has biased composition (acidic residues); it reads TAEEEGEGDEEEAEGEAAA.

The protein belongs to the tubulin family. In terms of assembly, dimer of alpha and beta chains. A typical microtubule is a hollow water-filled tube with an outer diameter of 25 nm and an inner diameter of 15 nM. Alpha-beta heterodimers associate head-to-tail to form protofilaments running lengthwise along the microtubule wall with the beta-tubulin subunit facing the microtubule plus end conferring a structural polarity. Microtubules usually have 13 protofilaments but different protofilament numbers can be found in some organisms and specialized cells. Mg(2+) is required as a cofactor.

It is found in the cytoplasm. Its subcellular location is the cytoskeleton. Its function is as follows. Tubulin is the major constituent of microtubules, a cylinder consisting of laterally associated linear protofilaments composed of alpha- and beta-tubulin heterodimers. Microtubules grow by the addition of GTP-tubulin dimers to the microtubule end, where a stabilizing cap forms. Below the cap, tubulin dimers are in GDP-bound state, owing to GTPase activity of alpha-tubulin. The protein is Tubulin beta-1 chain (TUBB1) of Cyanophora paradoxa.